Reading from the N-terminus, the 163-residue chain is MHTRAIYPGTFDPITNGHVDLIERAAKLFKHVTIGIAANPSKQPRFTLEERVELVNRVTAHLDNVEVVGFSGLLVDFAKEQKASVLVRGLRAVSDFEYEFQLANMNRRLSPDLESVFLTPAEENSFISSTLVKEVALHGGDVSQFVHPEVTAALAAKLKLVKP.

T10 serves as a coordination point for substrate. Residues 10 to 11 and H18 contribute to the ATP site; that span reads TF. Residues K42, L74, and R88 each coordinate substrate. Residues 89–91, E99, and 124–130 contribute to the ATP site; these read GLR and NSFISST.

It belongs to the bacterial CoaD family. As to quaternary structure, homohexamer. Mg(2+) is required as a cofactor.

Its subcellular location is the cytoplasm. The catalysed reaction is (R)-4'-phosphopantetheine + ATP + H(+) = 3'-dephospho-CoA + diphosphate. It functions in the pathway cofactor biosynthesis; coenzyme A biosynthesis; CoA from (R)-pantothenate: step 4/5. Its function is as follows. Reversibly transfers an adenylyl group from ATP to 4'-phosphopantetheine, yielding dephospho-CoA (dPCoA) and pyrophosphate. The sequence is that of Phosphopantetheine adenylyltransferase from Shewanella sp. (strain W3-18-1).